Reading from the N-terminus, the 137-residue chain is Thionin BTH7 (137 aa).

Positions Met1–Gly28 are cleaved as a signal peptide. 4 disulfide bridges follow: Cys31-Cys68, Cys32-Cys60, Cys40-Cys58, and Cys44-Cys54. A propeptide spans Leu75 to Ala137 (acidic domain).

It belongs to the plant thionin (TC 1.C.44) family. 4 C-C subfamily.

The protein resides in the secreted. Functionally, thionins are small plant proteins which are toxic to animal cells. They seem to exert their toxic effect at the level of the cell membrane. Their precise function is not known. This Hordeum vulgare (Barley) protein is Thionin BTH7.